The chain runs to 173 residues: MILSGKQIKDSLGKDIVIEPFNEKQINPNSYNLKLHNELLVYDEEVLDMKKPNKTKKLIIPEEGIVLEPRKLYLGRTLEYTETDKYVPMLEGRSSIGRLGVFIHVTAGFGDVGFKGYWTLEIFCVEPIRIYSGVEICQIYYHDVGGDYEKYSSGKYQNNKGIQPSLLYKDFIN.

Residues 93-98 (RSSIGR), Asp-111, 119-121 (TLE), Gln-138, and Tyr-151 each bind dCTP. The active-site Proton donor/acceptor is Glu-121.

It belongs to the dCTP deaminase family. In terms of assembly, homotrimer.

It carries out the reaction dCTP + 2 H2O = dUMP + NH4(+) + diphosphate. The protein operates within pyrimidine metabolism; dUMP biosynthesis; dUMP from dCTP: step 1/1. Bifunctional enzyme that catalyzes both the deamination of dCTP to dUTP and the hydrolysis of dUTP to dUMP without releasing the toxic dUTP intermediate. This Clostridium acetobutylicum (strain ATCC 824 / DSM 792 / JCM 1419 / IAM 19013 / LMG 5710 / NBRC 13948 / NRRL B-527 / VKM B-1787 / 2291 / W) protein is dCTP deaminase, dUMP-forming.